The following is a 542-amino-acid chain: Excitatory amino acid transporter 1 (542 aa).

The Cytoplasmic segment spans residues 1-47; it reads MTKSNGEEARLGGRMERFQQGVRKRTLLAKKKVQNITKEDVKSYLFR. A helical membrane pass occupies residues 48-68; sequence NAFVLLTVTAVIVGTILGFTL. Residues 69 to 86 are Extracellular-facing; that stretch reads RPYRMSYREVKYFSFPGE. The helical transmembrane segment at 87–108 threads the bilayer; sequence LLMRMLQMLVLPLIISSLVTGM. Topologically, residues 109–122 are cytoplasmic; that stretch reads AALDSKASGKMGMR. Residues 123–145 traverse the membrane as a helical segment; sequence AVVYYMTTTIIAVVIGIIIVIII. The Extracellular portion of the chain corresponds to 146 to 236; it reads HPGKGTKENM…ITEELVPVPG (91 aa). Residues 237-260 form a helical membrane-spanning segment; the sequence is SVNGVNALGLVVFSMCFGFVIGNM. Residues 261-269 are Cytoplasmic-facing; it reads KEQGQALRE. The helical transmembrane segment at 270 to 297 threads the bilayer; the sequence is FFDSLNEAIMRLVAVIMWYAPLGILFLI. The Extracellular portion of the chain corresponds to 298–318; it reads AGKIVEMEDMGVIGGQLAMYT. The helical transmembrane segment at 319-340 threads the bilayer; it reads VTVIVGLLIHAVIVLPLLYFLV. Over 341–345 the chain is Cytoplasmic; the sequence is TRKNP. Positions 346-376 form an intramembrane region, discontinuously helical; sequence WVFIGGLLQALITALGTSSSSATLPITFKCL. Residue 363–365 coordinates L-aspartate; the sequence is SSS. Over 377–385 the chain is Cytoplasmic; that stretch reads EENNGVDKR. The chain crosses the membrane as a helical span at residues 386-412; that stretch reads VTRFVLPVGATINMDGTALYEALAAIF. Gly394, Thr396, and Asn398 together coordinate Na(+). Thr402 contributes to the L-aspartate binding site. The Extracellular portion of the chain corresponds to 413–425; it reads IAQVNNFELNFGQ. Residues 426-459 constitute an intramembrane region (discontinuously helical); it reads IITISITATAASIGAAGIPQAGLVTMVIVLTSVG. Residue 443 to 447 participates in L-aspartate binding; the sequence is IPQAG. Over 460 to 472 the chain is Extracellular; sequence LPTDDITLIIAVD. Residues 473 to 494 form a helical membrane-spanning segment; that stretch reads WFLDRLRTTTNVLGDSLGAGIV. Residues Asp476 and Asn483 each coordinate L-aspartate. The Na(+) site is built by Asn483 and Asp487. Over 495–542 the chain is Cytoplasmic; that stretch reads EHLSRHELKNRDVEMGNSVIEENEMKKPYQLISQESEIEKSMDSETKM. Position 512 is a phosphoserine (Ser512).

It belongs to the dicarboxylate/amino acid:cation symporter (DAACS) (TC 2.A.23) family. SLC1A3 subfamily. As to quaternary structure, homotrimer. Glycosylated.

It localises to the cell membrane. It catalyses the reaction K(+)(in) + L-glutamate(out) + 3 Na(+)(out) + H(+)(out) = K(+)(out) + L-glutamate(in) + 3 Na(+)(in) + H(+)(in). It carries out the reaction K(+)(in) + L-aspartate(out) + 3 Na(+)(out) + H(+)(out) = K(+)(out) + L-aspartate(in) + 3 Na(+)(in) + H(+)(in). The enzyme catalyses D-aspartate(out) + K(+)(in) + 3 Na(+)(out) + H(+)(out) = D-aspartate(in) + K(+)(out) + 3 Na(+)(in) + H(+)(in). Sodium-dependent, high-affinity amino acid transporter that mediates the uptake of L-glutamate and also L-aspartate and D-aspartate. Functions as a symporter that transports one amino acid molecule together with two or three Na(+) ions and one proton, in parallel with the counter-transport of one K(+) ion. Plays a redundant role in the rapid removal of released glutamate from the synaptic cleft, which is essential for terminating the postsynaptic action of glutamate. This is Excitatory amino acid transporter 1 (SLC1A3) from Bos taurus (Bovine).